The sequence spans 284 residues: Formamidopyrimidine-DNA glycosylase (284 aa).

Catalysis depends on P2, which acts as the Schiff-base intermediate with DNA. E3 functions as the Proton donor in the catalytic mechanism. K59 (proton donor; for beta-elimination activity) is an active-site residue. The DNA site is built by H94 and R113. Residues 239–273 (KVHTKKDQPCSVCNQLIVKKKINGRGSYFCLNCQK) form an FPG-type zinc finger. Catalysis depends on R263, which acts as the Proton donor; for delta-elimination activity.

The protein belongs to the FPG family. Monomer. The cofactor is Zn(2+).

It carries out the reaction Hydrolysis of DNA containing ring-opened 7-methylguanine residues, releasing 2,6-diamino-4-hydroxy-5-(N-methyl)formamidopyrimidine.. The catalysed reaction is 2'-deoxyribonucleotide-(2'-deoxyribose 5'-phosphate)-2'-deoxyribonucleotide-DNA = a 3'-end 2'-deoxyribonucleotide-(2,3-dehydro-2,3-deoxyribose 5'-phosphate)-DNA + a 5'-end 5'-phospho-2'-deoxyribonucleoside-DNA + H(+). In terms of biological role, involved in base excision repair of DNA damaged by oxidation or by mutagenic agents. Acts as a DNA glycosylase that recognizes and removes damaged bases. Has a preference for oxidized purines, such as 7,8-dihydro-8-oxoguanine (8-oxoG). Has AP (apurinic/apyrimidinic) lyase activity and introduces nicks in the DNA strand. Cleaves the DNA backbone by beta-delta elimination to generate a single-strand break at the site of the removed base with both 3'- and 5'-phosphates. The sequence is that of Formamidopyrimidine-DNA glycosylase (mutM) from Mycoplasma genitalium (strain ATCC 33530 / DSM 19775 / NCTC 10195 / G37) (Mycoplasmoides genitalium).